An 846-amino-acid polypeptide reads, in one-letter code: FNIP repeat-containing protein DDB_G0289381 (846 aa).

Residues 1-11 (MKLLSFKKKPS) show a composition bias toward basic residues. The disordered stretch occupies residues 1-39 (MKLLSFKKKPSLTKSQSCPDKLKNLKEQQKDPKNGANYD). The span at 20 to 33 (DKLKNLKEQQKDPK) shows a compositional bias: basic and acidic residues. FNIP repeat units follow at residues 159–193 (IPNH…FGEK), 194–239 (FNQV…FGNN), 240–283 (FDQI…FQEN), and 284–325 (FNQP…YGGD). Residues 362–384 (SSISLDISGGGSGSGSGVNSTTT) are disordered. FNIP repeat units lie at residues 458 to 500 (FQQL…FGDG), 501 to 546 (FNQQ…FGKS), and 654 to 693 (FNQS…MFNK). The interval 702–734 (SNNNNENNNENNNENNNENNNENNNENNNNTNS) is disordered. The stretch at 702–734 (SNNNNENNNENNNENNNENNNENNNENNNNTNS) forms a coiled coil.

This is FNIP repeat-containing protein DDB_G0289381 from Dictyostelium discoideum (Social amoeba).